The primary structure comprises 247 residues: 3(1)-hydroxy-L-isoleucine 4-dioxygenase (247 aa).

Fe cation is bound by residues His160, Asp162, and His213.

It belongs to the iron/ascorbate-dependent oxidoreductase family. It depends on L-ascorbate as a cofactor. Fe(2+) serves as cofactor.

The catalysed reaction is 3(1)-hydroxy-L-isoleucine + 2-oxoglutarate + O2 = (4S)-3(1),4-dihydroxy-L-isoleucine + succinate + CO2. Its function is as follows. Catalyzes the hydroxylation of L-4'-hydroxyisoleucine (4'-HIL) at the C-4 position to form L-4,4'-dihydroxyisoleucine (4,4'-DIHIL). Together with HilA, catalyzes the two step conversion of L-isoleucine into L-4,4'-dihydroxyisoleucine. In vitro, in the absence of HilA, can also catalyze the oxidation of L-methionine and the C-4-hydroxylation of L-leucine and L-isoleucine. The sequence is that of 3(1)-hydroxy-L-isoleucine 4-dioxygenase from Pantoea ananatis (strain AJ13355).